The following is a 190-amino-acid chain: Peptide methionine sulfoxide reductase A2-2 (190 aa).

The disordered stretch occupies residues 1 to 20 (MSNDTGADGGAANPDLGPDA). Residues 10–20 (GAANPDLGPDA) show a composition bias toward low complexity.

Belongs to the MsrA Met sulfoxide reductase family.

It is found in the cytoplasm. The protein localises to the cytosol. It carries out the reaction L-methionyl-[protein] + [thioredoxin]-disulfide + H2O = L-methionyl-(S)-S-oxide-[protein] + [thioredoxin]-dithiol. The catalysed reaction is [thioredoxin]-disulfide + L-methionine + H2O = L-methionine (S)-S-oxide + [thioredoxin]-dithiol. Catalyzes the reduction of methionine sulfoxide (MetSO) to methionine in proteins. Plays a protective role against oxidative stress by restoring activity to proteins that have been inactivated by methionine oxidation. MSRA family specifically reduces the MetSO S-enantiomer. The sequence is that of Peptide methionine sulfoxide reductase A2-2 (MSRA2-2) from Oryza sativa subsp. japonica (Rice).